A 351-amino-acid polypeptide reads, in one-letter code: Glycerol-3-phosphate dehydrogenase [NAD(P)+] (351 aa).

Serine 18, tryptophan 19, arginine 38, and lysine 122 together coordinate NADPH. Residues lysine 122, glycine 153, and serine 155 each coordinate sn-glycerol 3-phosphate. Alanine 157 provides a ligand contact to NADPH. 5 residues coordinate sn-glycerol 3-phosphate: lysine 208, aspartate 261, serine 271, arginine 272, and asparagine 273. Lysine 208 serves as the catalytic Proton acceptor. Residue arginine 272 coordinates NADPH. Residue glutamate 297 participates in NADPH binding.

It belongs to the NAD-dependent glycerol-3-phosphate dehydrogenase family.

It localises to the cytoplasm. The catalysed reaction is sn-glycerol 3-phosphate + NAD(+) = dihydroxyacetone phosphate + NADH + H(+). It carries out the reaction sn-glycerol 3-phosphate + NADP(+) = dihydroxyacetone phosphate + NADPH + H(+). Its pathway is membrane lipid metabolism; glycerophospholipid metabolism. Catalyzes the reduction of the glycolytic intermediate dihydroxyacetone phosphate (DHAP) to sn-glycerol 3-phosphate (G3P), the key precursor for phospholipid synthesis. This is Glycerol-3-phosphate dehydrogenase [NAD(P)+] from Bordetella parapertussis (strain 12822 / ATCC BAA-587 / NCTC 13253).